A 347-amino-acid polypeptide reads, in one-letter code: NADH-ubiquinone oxidoreductase chain 2 (347 aa).

11 consecutive transmembrane segments (helical) span residues 2-22 (SPYV…MTLI), 25-45 (HWLT…PLMT), 56-76 (AIKY…SAIF), 96-116 (FMMT…FWVP), 122-142 (IPLL…ISIF), 149-169 (LNMS…GWGG), 178-197 (ILAY…IMIY), 202-219 (ILNL…FMVL), 241-261 (MIII…TGFM), 278-298 (LAMM…RIIY), and 326-346 (IPTL…FITL).

The protein belongs to the complex I subunit 2 family.

The protein localises to the mitochondrion inner membrane. It catalyses the reaction a ubiquinone + NADH + 5 H(+)(in) = a ubiquinol + NAD(+) + 4 H(+)(out). Its function is as follows. Core subunit of the mitochondrial membrane respiratory chain NADH dehydrogenase (Complex I) that is believed to belong to the minimal assembly required for catalysis. Complex I functions in the transfer of electrons from NADH to the respiratory chain. The immediate electron acceptor for the enzyme is believed to be ubiquinone. The polypeptide is NADH-ubiquinone oxidoreductase chain 2 (MT-ND2) (Didelphis virginiana (North American opossum)).